Here is a 471-residue protein sequence, read N- to C-terminus: Tryptophanase (471 aa).

K5, K115, and K156 each carry N6-acetyllysine. Residue K270 is modified to N6-(pyridoxal phosphate)lysine. K450 bears the N6-acetyllysine mark.

It belongs to the beta-eliminating lyase family. In terms of assembly, homotetramer. Pyridoxal 5'-phosphate is required as a cofactor.

It catalyses the reaction L-tryptophan + H2O = indole + pyruvate + NH4(+). The protein operates within amino-acid degradation; L-tryptophan degradation via pyruvate pathway; indole and pyruvate from L-tryptophan: step 1/1. The protein is Tryptophanase of Escherichia coli (strain SMS-3-5 / SECEC).